The following is a 155-amino-acid chain: Medium/long-chain acyl-CoA thioesterase YigI (155 aa).

The protein belongs to the YigI thioesterase family.

It localises to the cytoplasm. The enzyme catalyses a fatty acyl-CoA + H2O = a fatty acid + CoA + H(+). It carries out the reaction a medium-chain fatty acyl-CoA + H2O = a medium-chain fatty acid + CoA + H(+). The catalysed reaction is a long-chain fatty acyl-CoA + H2O = a long-chain fatty acid + CoA + H(+). Functionally, displays thioesterase activity against medium- to long-chain acyl-CoA substrates. Is involved in the thioesterase-dependent beta-oxidation pathway of (9Z,11E)-octadecadienoate (conjugated linoleic acid or CLA), along with TesB and FadM. The chain is Medium/long-chain acyl-CoA thioesterase YigI (yigI) from Shigella flexneri.